The following is a 222-amino-acid chain: 7-cyano-7-deazaguanine synthase (222 aa).

F11–L21 provides a ligand contact to ATP. Zn(2+) contacts are provided by C187, C195, C198, and C201.

Belongs to the QueC family. Zn(2+) serves as cofactor.

The enzyme catalyses 7-carboxy-7-deazaguanine + NH4(+) + ATP = 7-cyano-7-deazaguanine + ADP + phosphate + H2O + H(+). It functions in the pathway purine metabolism; 7-cyano-7-deazaguanine biosynthesis. Its function is as follows. Catalyzes the ATP-dependent conversion of 7-carboxy-7-deazaguanine (CDG) to 7-cyano-7-deazaguanine (preQ(0)). The chain is 7-cyano-7-deazaguanine synthase from Actinobacillus pleuropneumoniae serotype 5b (strain L20).